We begin with the raw amino-acid sequence, 137 residues long: Methylglyoxal synthase (137 aa).

The 137-residue stretch at 1-137 (MKIALIAHDK…NLVRGGEPNV (137 aa)) folds into the MGS-like domain. Substrate contacts are provided by residues His8, Lys12, 34–37 (TGTT), and 54–55 (SG). The active-site Proton donor/acceptor is Asp60. His87 contributes to the substrate binding site.

This sequence belongs to the methylglyoxal synthase family.

It carries out the reaction dihydroxyacetone phosphate = methylglyoxal + phosphate. Catalyzes the formation of methylglyoxal from dihydroxyacetone phosphate. This chain is Methylglyoxal synthase, found in Bacillus velezensis (strain DSM 23117 / BGSC 10A6 / LMG 26770 / FZB42) (Bacillus amyloliquefaciens subsp. plantarum).